Here is an 82-residue protein sequence, read N- to C-terminus: Small ribosomal subunit protein uS12 (82 aa).

The residue at position 59 (Asp-59) is a 3-methylthioaspartic acid.

The protein belongs to the universal ribosomal protein uS12 family. In terms of assembly, part of the 30S ribosomal subunit. Contacts proteins S8 and S17. May interact with IF1 in the 30S initiation complex.

In terms of biological role, with S4 and S5 plays an important role in translational accuracy. Functionally, interacts with and stabilizes bases of the 16S rRNA that are involved in tRNA selection in the A site and with the mRNA backbone. Located at the interface of the 30S and 50S subunits, it traverses the body of the 30S subunit contacting proteins on the other side and probably holding the rRNA structure together. The combined cluster of proteins S8, S12 and S17 appears to hold together the shoulder and platform of the 30S subunit. The chain is Small ribosomal subunit protein uS12 (rpsL) from Actinobacillus pleuropneumoniae (Haemophilus pleuropneumoniae).